A 270-amino-acid polypeptide reads, in one-letter code: NAD kinase (270 aa).

Asp63 acts as the Proton acceptor in catalysis. Residues 63 to 64 (DG), 131 to 132 (NE), Lys142, Arg159, Asp161, 172 to 177 (TAYAMS), Ala196, and Gln230 contribute to the NAD(+) site.

The protein belongs to the NAD kinase family. The cofactor is a divalent metal cation.

The protein localises to the cytoplasm. It catalyses the reaction NAD(+) + ATP = ADP + NADP(+) + H(+). Its function is as follows. Involved in the regulation of the intracellular balance of NAD and NADP, and is a key enzyme in the biosynthesis of NADP. Catalyzes specifically the phosphorylation on 2'-hydroxyl of the adenosine moiety of NAD to yield NADP. In Methanoculleus marisnigri (strain ATCC 35101 / DSM 1498 / JR1), this protein is NAD kinase.